Here is a 295-residue protein sequence, read N- to C-terminus: Polyisoprenoid diphosphate/phosphate phosphohydrolase PLPP6 (295 aa).

Disordered regions lie at residues 1–39 and 61–90; these read MPSP…SRFE and SESP…PEED. The Cytoplasmic portion of the chain corresponds to 1–132; sequence MPSPRRSMEG…ESSSWGSVRP (132 aa). The segment covering 16-27 has biased composition (low complexity); that stretch reads SASSSSSSPGSP. Phosphoserine is present on residues Ser26, Ser36, and Ser70. A helical membrane pass occupies residues 133 to 153; that stretch reads LMKLLEISGHGIPWLLGTLYC. Over 154 to 164 the chain is Lumenal; it reads LCRSDSWAGRE. The chain crosses the membrane as a helical span at residues 165–185; sequence VLMNLLFALLLDLLLVALIKG. The interval 184 to 192 is phosphatase sequence motif I; it reads KGLVRRRRP. Topologically, residues 186 to 228 are cytoplasmic; the sequence is LVRRRRPAHNQMDMFVTLSVDKYSFPSGHATRAALMSRFILNH. The tract at residues 211-214 is phosphatase sequence motif II; it reads PSGH. The active-site Proton donors is the His214. The chain crosses the membrane as a helical span at residues 229-249; that stretch reads LVLAIPLRVLVVLWAFVLGLS. The interval 249 to 260 is phosphatase sequence motif III; sequence SRVMLGRHNVTD. The Lumenal segment spans residues 250-260; sequence RVMLGRHNVTD. Catalysis depends on His256, which acts as the Nucleophile. A helical membrane pass occupies residues 261 to 281; it reads VAFGFFLGYMQYSIVDYCWLS. Residues 282–295 lie on the Cytoplasmic side of the membrane; the sequence is PHNAPVLFLLWSQR.

Belongs to the PA-phosphatase related phosphoesterase family. Phosphorylation by PKC activates the phosphatase activity towards presqualene diphosphate. As to expression, widely expressed. Expressed in most organs, in particular gastrointestinal organs, spleen, placenta, kidney, thymus and brain.

Its subcellular location is the endoplasmic reticulum membrane. The protein resides in the nucleus envelope. It localises to the nucleus inner membrane. It carries out the reaction presqualene diphosphate + H2O = presqualene phosphate + phosphate + H(+). The catalysed reaction is presqualene phosphate + H2O = presqualene alcohol + phosphate. It catalyses the reaction (2E,6E)-farnesyl diphosphate + H2O = (2E,6E)-farnesyl phosphate + phosphate + H(+). The enzyme catalyses (2E,6E)-farnesyl phosphate + H2O = (2E,6E)-farnesol + phosphate. It carries out the reaction (2E,6E,10E)-geranylgeranyl diphosphate + H2O = (2E,6E,10E)-geranylgeranyl phosphate + phosphate + H(+). The catalysed reaction is (2E,6E,10E)-geranylgeranyl phosphate + H2O = (2E,6E,10E)-geranylgeraniol + phosphate. It catalyses the reaction (2E)-geranyl diphosphate + H2O = (2E)-geranyl phosphate + phosphate + H(+). The enzyme catalyses (2E)-geranyl phosphate + H2O = (2E)-geraniol + phosphate. It carries out the reaction 1,2-dihexadecanoyl-sn-glycero-3-phosphate + H2O = 1,2-dihexadecanoyl-sn-glycerol + phosphate. Its activity is regulated as follows. Inhibited by propranolol. Not inhibited by N-ethylmaleimide or bromoenolactome. Magnesium-independent polyisoprenoid diphosphatase that catalyzes the sequential dephosphorylation of presqualene, farnesyl, geranyl and geranylgeranyl diphosphates. Functions in the innate immune response through the dephosphorylation of presqualene diphosphate which acts as a potent inhibitor of the signaling pathways contributing to polymorphonuclear neutrophils activation. May regulate the biosynthesis of cholesterol and related sterols by dephosphorylating presqualene and farnesyl diphosphate, two key intermediates in this biosynthetic pathway. May also play a role in protein prenylation by acting on farnesyl diphosphate and its derivative geranylgeranyl diphosphate, two precursors for the addition of isoprenoid anchors to membrane proteins. Has a lower activity towards phosphatidic acid (PA), but through phosphatidic acid dephosphorylation may participate in the biosynthesis of phospholipids and triacylglycerols. May also act on ceramide-1-P, lysophosphatidic acid (LPA) and sphing-4-enine 1-phosphate/sphingosine-1-phosphate. The sequence is that of Polyisoprenoid diphosphate/phosphate phosphohydrolase PLPP6 from Homo sapiens (Human).